The chain runs to 274 residues: Glutamate--cysteine ligase regulatory subunit (274 aa).

Lysine 263 is subject to N6-acetyllysine.

This sequence belongs to the aldo/keto reductase family. Glutamate--cysteine ligase light chain subfamily. Heterodimer of a catalytic heavy chain and a regulatory light chain. In all tissues examined. Highest levels in skeletal muscle.

The protein operates within sulfur metabolism; glutathione biosynthesis; glutathione from L-cysteine and L-glutamate: step 1/2. This chain is Glutamate--cysteine ligase regulatory subunit (GCLM), found in Homo sapiens (Human).